The primary structure comprises 211 residues: MILVLLGPPGSGKGTQGALLKSELSFEHISTGDMLRAEVSKKSPLGLKAEEYMKQGLLVPDDLIIAMIKNILTEAPHKNYVFDGFPRNVNQAEAFETMLNTMRLQVDKVFYFDLEDDVIIKRLSGRRVCPKCGATYNIYYQKPKNDTLCDNDATPLIQRDDDKEEVIVNRLRVYKEQTFPLIEYYKYKNKLFVVSADGTQEEVFEKLKSML.

Position 10-15 (10-15) interacts with ATP; the sequence is GSGKGT. An NMP region spans residues 30 to 59; the sequence is STGDMLRAEVSKKSPLGLKAEEYMKQGLLV. Residues Thr-31, Arg-36, 57 to 59, 84 to 87, and Gln-91 contribute to the AMP site; these read LLV and GFPR. The tract at residues 125 to 162 is LID; the sequence is GRRVCPKCGATYNIYYQKPKNDTLCDNDATPLIQRDDD. Arg-126 contributes to the ATP binding site. Positions 129 and 132 each coordinate Zn(2+). Position 135–136 (135–136) interacts with ATP; it reads TY. Zn(2+)-binding residues include Cys-149 and Asp-152. Residues Arg-159 and Arg-170 each coordinate AMP. ATP is bound at residue Gly-198.

Belongs to the adenylate kinase family. As to quaternary structure, monomer.

It localises to the cytoplasm. It catalyses the reaction AMP + ATP = 2 ADP. It participates in purine metabolism; AMP biosynthesis via salvage pathway; AMP from ADP: step 1/1. Its function is as follows. Catalyzes the reversible transfer of the terminal phosphate group between ATP and AMP. Plays an important role in cellular energy homeostasis and in adenine nucleotide metabolism. This is Adenylate kinase from Hydrogenobaculum sp. (strain Y04AAS1).